The primary structure comprises 84 residues: Small ribosomal subunit protein bS16 (84 aa).

It belongs to the bacterial ribosomal protein bS16 family.

In Cupriavidus necator (strain ATCC 17699 / DSM 428 / KCTC 22496 / NCIMB 10442 / H16 / Stanier 337) (Ralstonia eutropha), this protein is Small ribosomal subunit protein bS16.